Here is a 431-residue protein sequence, read N- to C-terminus: GTPase Obg (431 aa).

Residues 1-158 (MFVDQVKVDV…LTIRMELKVL (158 aa)) enclose the Obg domain. In terms of domain architecture, OBG-type G spans 159–335 (ADVGLVGFPS…LLAKTADLLD (177 aa)). GTP-binding positions include 165-172 (GFPSVGKS), 190-194 (FTTLV), 212-215 (DLPG), 282-285 (TKMD), and 316-318 (SSI). Mg(2+) is bound by residues Ser-172 and Thr-192. One can recognise an OCT domain in the interval 353–431 (YTTEADADFS…ILDYSFQFMD (79 aa)).

It belongs to the TRAFAC class OBG-HflX-like GTPase superfamily. OBG GTPase family. Monomer. Requires Mg(2+) as cofactor.

The protein resides in the cytoplasm. An essential GTPase which binds GTP, GDP and possibly (p)ppGpp with moderate affinity, with high nucleotide exchange rates and a fairly low GTP hydrolysis rate. Plays a role in control of the cell cycle, stress response, ribosome biogenesis and in those bacteria that undergo differentiation, in morphogenesis control. The sequence is that of GTPase Obg from Lactiplantibacillus plantarum (strain ATCC BAA-793 / NCIMB 8826 / WCFS1) (Lactobacillus plantarum).